The primary structure comprises 308 residues: Glutathione synthetase (308 aa).

Residues 120–304 (KLGALRFNNL…LADQVIARLL (185 aa)) form the ATP-grasp domain. 146–202 (AREQEEVVLKPLGGRAGQGLVRVAGAAPGLEALLELVTDQEQLPVMVQRFLPAVIEG) contributes to the ATP binding site. Residues Glu275 and Asn277 each coordinate Mg(2+).

This sequence belongs to the prokaryotic GSH synthase family. Mg(2+) is required as a cofactor. Requires Mn(2+) as cofactor.

The enzyme catalyses gamma-L-glutamyl-L-cysteine + glycine + ATP = glutathione + ADP + phosphate + H(+). It participates in sulfur metabolism; glutathione biosynthesis; glutathione from L-cysteine and L-glutamate: step 2/2. In Prochlorococcus marinus (strain MIT 9313), this protein is Glutathione synthetase.